The following is a 373-amino-acid chain: tRNA-specific 2-thiouridylase MnmA (373 aa).

Residues 12 to 19 (GMSGGVDS) and Met-38 each bind ATP. An interaction with target base in tRNA region spans residues 98–100 (NPD). Residue Cys-103 is the Nucleophile of the active site. Cys-103 and Cys-200 form a disulfide bridge. Gly-127 is an ATP binding site. The interaction with tRNA stretch occupies residues 150-152 (KDQ). Cys-200 functions as the Cysteine persulfide intermediate in the catalytic mechanism. The tract at residues 312–313 (RY) is interaction with tRNA.

The protein belongs to the MnmA/TRMU family.

The protein localises to the cytoplasm. The catalysed reaction is S-sulfanyl-L-cysteinyl-[protein] + uridine(34) in tRNA + AH2 + ATP = 2-thiouridine(34) in tRNA + L-cysteinyl-[protein] + A + AMP + diphosphate + H(+). Catalyzes the 2-thiolation of uridine at the wobble position (U34) of tRNA, leading to the formation of s(2)U34. This Streptococcus pyogenes serotype M12 (strain MGAS2096) protein is tRNA-specific 2-thiouridylase MnmA.